A 446-amino-acid polypeptide reads, in one-letter code: Phosphoglucosamine mutase (446 aa).

S103 (phosphoserine intermediate) is an active-site residue. Residues S103, D242, D244, and D246 each contribute to the Mg(2+) site. S103 is modified (phosphoserine).

This sequence belongs to the phosphohexose mutase family. It depends on Mg(2+) as a cofactor. Activated by phosphorylation.

The enzyme catalyses alpha-D-glucosamine 1-phosphate = D-glucosamine 6-phosphate. Catalyzes the conversion of glucosamine-6-phosphate to glucosamine-1-phosphate. In Vibrio vulnificus (strain YJ016), this protein is Phosphoglucosamine mutase.